Reading from the N-terminus, the 243-residue chain is 7-cyano-7-deazaguanine synthase (243 aa).

Position 18–28 (18–28 (FSGGQDSATCL)) interacts with ATP. The Zn(2+) site is built by Cys-206, Cys-221, Cys-224, and Cys-227.

It belongs to the QueC family. The cofactor is Zn(2+).

The catalysed reaction is 7-carboxy-7-deazaguanine + NH4(+) + ATP = 7-cyano-7-deazaguanine + ADP + phosphate + H2O + H(+). The protein operates within purine metabolism; 7-cyano-7-deazaguanine biosynthesis. In terms of biological role, catalyzes the ATP-dependent conversion of 7-carboxy-7-deazaguanine (CDG) to 7-cyano-7-deazaguanine (preQ(0)). The sequence is that of 7-cyano-7-deazaguanine synthase from Methylorubrum extorquens (strain CM4 / NCIMB 13688) (Methylobacterium extorquens).